Here is a 402-residue protein sequence, read N- to C-terminus: MRPKQVWVSVAFEGEWNEKKPYVTESIEAGVDVIVCLPEDVERVKELGNVKVAVPLMPESPGSPDLALEELDAIDADVVIVGKGGEGDGSIDLPDDISESIDAALIEKARDRGFEVAEYVEILDKPYERFAAEIAKNVGPDYVIAIGRDWKIIPLENLIAELQGEKTQLIAGARDAEEARIAFETLEVGSDGVLLDAERIDPSEIKKTAEIAERAAAERFELVAVEVKEVKPIGKGDRVCVDTCSLMSEGEGMLVGSTSRGMFLIHSESLENPYVEPRPFRVNAGPVHAYIRVPGGKTKYLAELRPGDEVLIVDTEGRTRAAVVGRLKIERRPLMLIRAEYEGVEIQTIVQNAETIHLVREDGEPVSVVDLKPGDKVLAYVETEEGKGRHFGMEVEETIVEK.

Belongs to the archaeal-type DHQ synthase family.

The enzyme catalyses 2-amino-2,3,7-trideoxy-D-lyxo-hept-6-ulosonate + NAD(+) + H2O = 3-dehydroquinate + NH4(+) + NADH + H(+). Its function is as follows. Catalyzes the oxidative deamination and cyclization of 2-amino-3,7-dideoxy-D-threo-hept-6-ulosonic acid (ADH) to yield 3-dehydroquinate (DHQ), which is fed into the canonical shikimic pathway of aromatic amino acid biosynthesis. This Methanopyrus kandleri (strain AV19 / DSM 6324 / JCM 9639 / NBRC 100938) protein is 3-dehydroquinate synthase.